The sequence spans 269 residues: Formamidopyrimidine-DNA glycosylase (269 aa).

P2 acts as the Schiff-base intermediate with DNA in catalysis. E3 functions as the Proton donor in the catalytic mechanism. K57 acts as the Proton donor; for beta-elimination activity in catalysis. Residues H90, R109, and K150 each coordinate DNA. The segment at 235–269 (QVYGRKGEPCRVCGTPIVATKHAQRATFYCRQCQK) adopts an FPG-type zinc-finger fold. R259 functions as the Proton donor; for delta-elimination activity in the catalytic mechanism.

Belongs to the FPG family. As to quaternary structure, monomer. Zn(2+) is required as a cofactor.

It carries out the reaction Hydrolysis of DNA containing ring-opened 7-methylguanine residues, releasing 2,6-diamino-4-hydroxy-5-(N-methyl)formamidopyrimidine.. It catalyses the reaction 2'-deoxyribonucleotide-(2'-deoxyribose 5'-phosphate)-2'-deoxyribonucleotide-DNA = a 3'-end 2'-deoxyribonucleotide-(2,3-dehydro-2,3-deoxyribose 5'-phosphate)-DNA + a 5'-end 5'-phospho-2'-deoxyribonucleoside-DNA + H(+). Involved in base excision repair of DNA damaged by oxidation or by mutagenic agents. Acts as a DNA glycosylase that recognizes and removes damaged bases. Has a preference for oxidized purines, such as 7,8-dihydro-8-oxoguanine (8-oxoG). Has AP (apurinic/apyrimidinic) lyase activity and introduces nicks in the DNA strand. Cleaves the DNA backbone by beta-delta elimination to generate a single-strand break at the site of the removed base with both 3'- and 5'-phosphates. The polypeptide is Formamidopyrimidine-DNA glycosylase (Shigella dysenteriae serotype 1 (strain Sd197)).